We begin with the raw amino-acid sequence, 307 residues long: NAD kinase 1 (307 aa).

Asp-67 serves as the catalytic Proton acceptor. Residues Asp-67–Gly-68, Asn-149–Glu-150, Arg-160, Asp-181, and Thr-192–Ser-197 contribute to the NAD(+) site.

Belongs to the NAD kinase family. A divalent metal cation is required as a cofactor.

It is found in the cytoplasm. The catalysed reaction is NAD(+) + ATP = ADP + NADP(+) + H(+). Functionally, involved in the regulation of the intracellular balance of NAD and NADP, and is a key enzyme in the biosynthesis of NADP. Catalyzes specifically the phosphorylation on 2'-hydroxyl of the adenosine moiety of NAD to yield NADP. Essential for photoheterotrophic growth. Has a significant function in the oxidative pentose phosphate (OPP) pathway for glucose catabolism under photoheterotrophic conditions. Is also involved in cellular redox homeostasis. In Synechocystis sp. (strain ATCC 27184 / PCC 6803 / Kazusa), this protein is NAD kinase 1.